The sequence spans 143 residues: Transcriptional regulator MraZ (143 aa).

SpoVT-AbrB domains follow at residues 5 to 47 (EYSH…PMPV) and 76 to 119 (AMEA…SDEN).

This sequence belongs to the MraZ family. As to quaternary structure, forms oligomers.

It localises to the cytoplasm. Its subcellular location is the nucleoid. This chain is Transcriptional regulator MraZ, found in Leuconostoc citreum (strain KM20).